The primary structure comprises 171 residues: Adenine phosphoribosyltransferase (171 aa).

It belongs to the purine/pyrimidine phosphoribosyltransferase family. In terms of assembly, homodimer.

It is found in the cytoplasm. The catalysed reaction is AMP + diphosphate = 5-phospho-alpha-D-ribose 1-diphosphate + adenine. The protein operates within purine metabolism; AMP biosynthesis via salvage pathway; AMP from adenine: step 1/1. In terms of biological role, catalyzes a salvage reaction resulting in the formation of AMP, that is energically less costly than de novo synthesis. The sequence is that of Adenine phosphoribosyltransferase from Geotalea daltonii (strain DSM 22248 / JCM 15807 / FRC-32) (Geobacter daltonii).